Consider the following 358-residue polypeptide: Aromatic amino acid aminotransferase (358 aa).

Lys-214 carries the N6-(pyridoxal phosphate)lysine modification.

The protein belongs to the class-II pyridoxal-phosphate-dependent aminotransferase family. In terms of assembly, homodimer. The cofactor is pyridoxal 5'-phosphate.

It catalyses the reaction an aromatic L-alpha-amino acid + 2-oxoglutarate = an aromatic oxo-acid + L-glutamate. Its function is as follows. Aminotransferase that catalyzes the conversion of aromatic amino acids and 2-oxoglutarate into corresponding aromatic oxo acids and L-glutamate. This Rhodococcus opacus (strain B4) protein is Aromatic amino acid aminotransferase.